Here is a 205-residue protein sequence, read N- to C-terminus: Guanylate kinase (205 aa).

Residues 5–184 (GLLIVLSGPS…AVQKIKGIVE (180 aa)) enclose the Guanylate kinase-like domain. 12-19 (GPSGVGKG) is a binding site for ATP.

It belongs to the guanylate kinase family.

It localises to the cytoplasm. The catalysed reaction is GMP + ATP = GDP + ADP. Functionally, essential for recycling GMP and indirectly, cGMP. This Listeria innocua serovar 6a (strain ATCC BAA-680 / CLIP 11262) protein is Guanylate kinase.